The chain runs to 102 residues: Putative pterin-4-alpha-carbinolamine dehydratase (102 aa).

This sequence belongs to the pterin-4-alpha-carbinolamine dehydratase family.

It carries out the reaction (4aS,6R)-4a-hydroxy-L-erythro-5,6,7,8-tetrahydrobiopterin = (6R)-L-erythro-6,7-dihydrobiopterin + H2O. The protein is Putative pterin-4-alpha-carbinolamine dehydratase of Burkholderia cenocepacia (strain ATCC BAA-245 / DSM 16553 / LMG 16656 / NCTC 13227 / J2315 / CF5610) (Burkholderia cepacia (strain J2315)).